The chain runs to 323 residues: Glucokinase (323 aa).

8–13 is an ATP binding site; the sequence is GDVGGT.

Belongs to the bacterial glucokinase family.

It is found in the cytoplasm. It catalyses the reaction D-glucose + ATP = D-glucose 6-phosphate + ADP + H(+). This chain is Glucokinase, found in Yersinia pseudotuberculosis serotype I (strain IP32953).